Reading from the N-terminus, the 426-residue chain is Gamma-glutamyl phosphate reductase (426 aa).

It belongs to the gamma-glutamyl phosphate reductase family.

It is found in the cytoplasm. It carries out the reaction L-glutamate 5-semialdehyde + phosphate + NADP(+) = L-glutamyl 5-phosphate + NADPH + H(+). It participates in amino-acid biosynthesis; L-proline biosynthesis; L-glutamate 5-semialdehyde from L-glutamate: step 2/2. In terms of biological role, catalyzes the NADPH-dependent reduction of L-glutamate 5-phosphate into L-glutamate 5-semialdehyde and phosphate. The product spontaneously undergoes cyclization to form 1-pyrroline-5-carboxylate. The polypeptide is Gamma-glutamyl phosphate reductase (Acidovorax ebreus (strain TPSY) (Diaphorobacter sp. (strain TPSY))).